Consider the following 238-residue polypeptide: Cysteine-rich venom protein 2 (238 aa).

Residues 1-19 (MIAFIVLLSLAAVLQQSSG) form the signal peptide. Residues 38–164 (VDKHNALRRS…STKYLYVCQY (127 aa)) enclose the SCP domain. Disulfide bonds link C75-C153, C92-C165, C148-C162, C184-C191, C187-C196, C200-C233, C209-C227, and C218-C231. The ShKT domain occupies 200-233 (CEYEDAYTNCNDLVKERKCQTEWIKSQCPATCFC).

Belongs to the CRISP family. In terms of tissue distribution, expressed by the venom gland.

Its subcellular location is the secreted. Functionally, blocks contraction of smooth muscle elicited by high potassium-induced depolarization, but does not block caffeine-stimulated contraction. May target voltage-gated calcium channels (Cav) on smooth muscle. The polypeptide is Cysteine-rich venom protein 2 (Hydrophis hardwickii (Hardwick's spine-bellied seasnake)).